The following is a 398-amino-acid chain: Succinate--CoA ligase [ADP-forming] subunit beta (398 aa).

Positions 9-250 (KQLFARYGVP…VDEEDPVELQ (242 aa)) constitute an ATP-grasp domain. ATP is bound by residues Lys50, 57-59 (GRG), Glu104, Leu107, and Glu112. Positions 205 and 219 each coordinate Mg(2+). Substrate is bound by residues Asn270 and 327–329 (GIM).

Belongs to the succinate/malate CoA ligase beta subunit family. Heterotetramer of two alpha and two beta subunits. The cofactor is Mg(2+).

The enzyme catalyses succinate + ATP + CoA = succinyl-CoA + ADP + phosphate. It catalyses the reaction GTP + succinate + CoA = succinyl-CoA + GDP + phosphate. It functions in the pathway carbohydrate metabolism; tricarboxylic acid cycle; succinate from succinyl-CoA (ligase route): step 1/1. In terms of biological role, succinyl-CoA synthetase functions in the citric acid cycle (TCA), coupling the hydrolysis of succinyl-CoA to the synthesis of either ATP or GTP and thus represents the only step of substrate-level phosphorylation in the TCA. The beta subunit provides nucleotide specificity of the enzyme and binds the substrate succinate, while the binding sites for coenzyme A and phosphate are found in the alpha subunit. This is Succinate--CoA ligase [ADP-forming] subunit beta from Sorangium cellulosum (strain So ce56) (Polyangium cellulosum (strain So ce56)).